A 64-amino-acid polypeptide reads, in one-letter code: p7b (64 aa).

Over 1 to 12 (MECVCVDSSWPQ) the chain is Cytoplasmic. The chain crosses the membrane as a helical; Signal-anchor for type II membrane protein span at residues 13 to 30 (WLRNLILGILISSILFIL). At 31–64 (TKTQDTVAVYHEPSVYSIDQTQKFQKIDIHNGGK) the chain is on the lumenal side.

It belongs to the gammacarmovirus double gene block protein 2 family.

It localises to the host endoplasmic reticulum membrane. Required for cell-to-cell movement of virions in the host plant together with p7a. This is p7b from Maize chlorotic mottle virus (isolate United States/Kansas/1987) (MCMV).